Here is a 283-residue protein sequence, read N- to C-terminus: ATP phosphoribosyltransferase (283 aa).

This sequence belongs to the ATP phosphoribosyltransferase family. Long subfamily. Mg(2+) serves as cofactor.

It is found in the cytoplasm. It catalyses the reaction 1-(5-phospho-beta-D-ribosyl)-ATP + diphosphate = 5-phospho-alpha-D-ribose 1-diphosphate + ATP. Its pathway is amino-acid biosynthesis; L-histidine biosynthesis; L-histidine from 5-phospho-alpha-D-ribose 1-diphosphate: step 1/9. Its activity is regulated as follows. Feedback inhibited by histidine. In terms of biological role, catalyzes the condensation of ATP and 5-phosphoribose 1-diphosphate to form N'-(5'-phosphoribosyl)-ATP (PR-ATP). Has a crucial role in the pathway because the rate of histidine biosynthesis seems to be controlled primarily by regulation of HisG enzymatic activity. The protein is ATP phosphoribosyltransferase of Bifidobacterium longum (strain DJO10A).